The primary structure comprises 1573 residues: Pentafunctional AROM polypeptide (1573 aa).

A 3-dehydroquinate synthase region spans residues 1–384 (MSNESNIITV…YEKHATVVSD (384 aa)). Residues 46-48 (DSN), 83-86 (ESSK), 114-116 (GGV), and Asp-119 contribute to the NAD(+) site. Residue Arg-130 participates in 7-phospho-2-dehydro-3-deoxy-D-arabino-heptonate binding. NAD(+) is bound at residue 139–140 (TT). Residues Asp-146 and Lys-152 each coordinate 7-phospho-2-dehydro-3-deoxy-D-arabino-heptonate. Lys-161 contributes to the NAD(+) binding site. Asn-162 is a 7-phospho-2-dehydro-3-deoxy-D-arabino-heptonate binding site. NAD(+) contacts are provided by residues 179–182 (FLHT) and Asn-190. Glu-194 provides a ligand contact to Zn(2+). 7-phospho-2-dehydro-3-deoxy-D-arabino-heptonate-binding positions include 194–197 (EIIK) and Lys-250. Glu-260 functions as the Proton acceptor; for 3-dehydroquinate synthase activity in the catalytic mechanism. 7-phospho-2-dehydro-3-deoxy-D-arabino-heptonate-binding positions include 264–268 (RNLLN) and His-271. His-271 is a Zn(2+) binding site. The active-site Proton acceptor; for 3-dehydroquinate synthase activity is His-275. 2 residues coordinate 7-phospho-2-dehydro-3-deoxy-D-arabino-heptonate: His-287 and Lys-356. His-287 provides a ligand contact to Zn(2+). Residues 397–843 (VDEFTKSSWD…WDVLHQSFGV (447 aa)) form an EPSP synthase region. Catalysis depends on Cys-825, which acts as the For EPSP synthase activity. The segment at 863 to 1058 (NASIILIGMR…KTKKRSTFLT (196 aa)) is shikimate kinase. 870 to 877 (GMRGAGKT) is a binding site for ATP. A 3-dehydroquinase region spans residues 1059 to 1280 (LNYPRIEDAL…AAPGQLTVKQ (222 aa)). Catalysis depends on His-1182, which acts as the Proton acceptor; for 3-dehydroquinate dehydratase activity. Lys-1211 (schiff-base intermediate with substrate; for 3-dehydroquinate dehydratase activity) is an active-site residue. Residues 1293–1573 (PEKFFLFGKP…FDAVYQKVIE (281 aa)) are shikimate dehydrogenase.

This sequence in the N-terminal section; belongs to the sugar phosphate cyclases superfamily. Dehydroquinate synthase family. It in the 2nd section; belongs to the EPSP synthase family. In the 3rd section; belongs to the shikimate kinase family. The protein in the 4th section; belongs to the type-I 3-dehydroquinase family. This sequence in the C-terminal section; belongs to the shikimate dehydrogenase family. Homodimer. It depends on Zn(2+) as a cofactor.

It is found in the cytoplasm. The catalysed reaction is 7-phospho-2-dehydro-3-deoxy-D-arabino-heptonate = 3-dehydroquinate + phosphate. It carries out the reaction 3-dehydroquinate = 3-dehydroshikimate + H2O. The enzyme catalyses shikimate + NADP(+) = 3-dehydroshikimate + NADPH + H(+). It catalyses the reaction shikimate + ATP = 3-phosphoshikimate + ADP + H(+). The catalysed reaction is 3-phosphoshikimate + phosphoenolpyruvate = 5-O-(1-carboxyvinyl)-3-phosphoshikimate + phosphate. It functions in the pathway metabolic intermediate biosynthesis; chorismate biosynthesis; chorismate from D-erythrose 4-phosphate and phosphoenolpyruvate: step 2/7. It participates in metabolic intermediate biosynthesis; chorismate biosynthesis; chorismate from D-erythrose 4-phosphate and phosphoenolpyruvate: step 3/7. The protein operates within metabolic intermediate biosynthesis; chorismate biosynthesis; chorismate from D-erythrose 4-phosphate and phosphoenolpyruvate: step 4/7. Its pathway is metabolic intermediate biosynthesis; chorismate biosynthesis; chorismate from D-erythrose 4-phosphate and phosphoenolpyruvate: step 5/7. It functions in the pathway metabolic intermediate biosynthesis; chorismate biosynthesis; chorismate from D-erythrose 4-phosphate and phosphoenolpyruvate: step 6/7. The AROM polypeptide catalyzes 5 consecutive enzymatic reactions in prechorismate polyaromatic amino acid biosynthesis. In Schizosaccharomyces pombe (strain 972 / ATCC 24843) (Fission yeast), this protein is Pentafunctional AROM polypeptide.